The chain runs to 386 residues: Ethanolamine kinase 2 (386 aa).

The protein belongs to the choline/ethanolamine kinase family. In terms of tissue distribution, expressed in kidney, liver, ovary, testis and prostate.

The enzyme catalyses ethanolamine + ATP = phosphoethanolamine + ADP + H(+). The protein operates within phospholipid metabolism; phosphatidylethanolamine biosynthesis; phosphatidylethanolamine from ethanolamine: step 1/3. Functionally, highly specific for ethanolamine phosphorylation. Does not have choline kinase activity. This chain is Ethanolamine kinase 2 (ETNK2), found in Homo sapiens (Human).